A 278-amino-acid polypeptide reads, in one-letter code: Large ribosomal subunit protein uL2 (278 aa).

The tract at residues 222–278 is disordered; that stretch reads GVVMNPIDHPHGGGEGRTSGGRHPVTPWGKPTKGKKTRSNKSTNKFILISRHKRKKK.

The protein belongs to the universal ribosomal protein uL2 family. In terms of assembly, part of the 50S ribosomal subunit. Forms a bridge to the 30S subunit in the 70S ribosome.

In terms of biological role, one of the primary rRNA binding proteins. Required for association of the 30S and 50S subunits to form the 70S ribosome, for tRNA binding and peptide bond formation. It has been suggested to have peptidyltransferase activity; this is somewhat controversial. Makes several contacts with the 16S rRNA in the 70S ribosome. The chain is Large ribosomal subunit protein uL2 from Afipia carboxidovorans (strain ATCC 49405 / DSM 1227 / KCTC 32145 / OM5) (Oligotropha carboxidovorans).